The chain runs to 753 residues: 5-methyltetrahydropteroyltriglutamate--homocysteine methyltransferase (753 aa).

5-methyltetrahydropteroyltri-L-glutamate contacts are provided by residues 17-20 and lysine 117; that span reads RELK. L-homocysteine is bound by residues 431-433 and glutamate 484; that span reads IGS. L-methionine-binding positions include 431–433 and glutamate 484; that span reads IGS. 5-methyltetrahydropteroyltri-L-glutamate contacts are provided by residues 515-516 and tryptophan 561; that span reads RC. Aspartate 599 contacts L-homocysteine. Residue aspartate 599 coordinates L-methionine. Glutamate 605 contributes to the 5-methyltetrahydropteroyltri-L-glutamate binding site. 3 residues coordinate Zn(2+): histidine 641, cysteine 643, and glutamate 665. Residue histidine 694 is the Proton donor of the active site. Cysteine 726 lines the Zn(2+) pocket.

It belongs to the vitamin-B12 independent methionine synthase family. The cofactor is Zn(2+).

It catalyses the reaction 5-methyltetrahydropteroyltri-L-glutamate + L-homocysteine = tetrahydropteroyltri-L-glutamate + L-methionine. It participates in amino-acid biosynthesis; L-methionine biosynthesis via de novo pathway; L-methionine from L-homocysteine (MetE route): step 1/1. Its function is as follows. Catalyzes the transfer of a methyl group from 5-methyltetrahydrofolate to homocysteine resulting in methionine formation. In Escherichia coli O7:K1 (strain IAI39 / ExPEC), this protein is 5-methyltetrahydropteroyltriglutamate--homocysteine methyltransferase.